The sequence spans 148 residues: Putative nickel-responsive regulator (148 aa).

Positions 88, 99, 101, and 107 each coordinate Ni(2+).

The protein belongs to the transcriptional regulatory CopG/NikR family. As to quaternary structure, homotetramer. It depends on Ni(2+) as a cofactor.

Functionally, transcriptional regulator. The sequence is that of Putative nickel-responsive regulator from Helicobacter pylori (strain J99 / ATCC 700824) (Campylobacter pylori J99).